The sequence spans 468 residues: 6-phospho-beta-galactosidase 2 (468 aa).

D-galactose 6-phosphate-binding residues include glutamine 19, histidine 116, asparagine 159, glutamate 160, and asparagine 297. The active-site Proton donor is the glutamate 160. The active-site Nucleophile is glutamate 375. Serine 428, tryptophan 429, lysine 435, and tyrosine 437 together coordinate D-galactose 6-phosphate.

Belongs to the glycosyl hydrolase 1 family.

It catalyses the reaction a 6-phospho-beta-D-galactoside + H2O = D-galactose 6-phosphate + an alcohol. It participates in carbohydrate metabolism; lactose degradation; D-galactose 6-phosphate and beta-D-glucose from lactose 6-phosphate: step 1/1. In Streptococcus pneumoniae (strain ATCC BAA-255 / R6), this protein is 6-phospho-beta-galactosidase 2.